The following is a 66-amino-acid chain: Large ribosomal subunit protein uL29 (66 aa).

The protein belongs to the universal ribosomal protein uL29 family.

The chain is Large ribosomal subunit protein uL29 from Sinorhizobium fredii (strain NBRC 101917 / NGR234).